Here is a 442-residue protein sequence, read N- to C-terminus: Cell division protein FtsA (442 aa).

Belongs to the FtsA/MreB family. Self-interacts. Interacts with FtsZ.

It is found in the cell inner membrane. Functionally, cell division protein that is involved in the assembly of the Z ring. May serve as a membrane anchor for the Z ring. The protein is Cell division protein FtsA of Rhizobium meliloti (strain 1021) (Ensifer meliloti).